The primary structure comprises 2410 residues: Reducing polyketide synthase FUB1 (2410 aa).

Positions M1 to G42 are enriched in low complexity. The tract at residues M1–V52 is disordered. The Ketosynthase family 3 (KS3) domain maps to S57–D479. Catalysis depends on for beta-ketoacyl synthase activity residues C230, H365, and H403. Residues T608 to A929 form a malonyl-CoA:ACP transacylase (MAT) domain region. The active-site For malonyltransferase activity is S699. Residues L994 to D1127 are N-terminal hotdog fold. One can recognise a PKS/mFAS DH domain in the interval L994–S1307. The segment at E995–R1302 is dehydratase (DH) domain. The active-site Proton acceptor; for dehydratase activity is H1026. The segment at L1155–S1307 is C-terminal hotdog fold. The Proton donor; for dehydratase activity role is filled by D1220. An enoyl reductase (ER) domain region spans residues G1714–L2026. The tract at residues A2050–V2226 is ketoreductase (KR) domain. One can recognise a Carrier domain in the interval E2329–S2406. An O-(pantetheine 4'-phosphoryl)serine modification is found at S2366.

It functions in the pathway mycotoxin biosynthesis. Functionally, reducing polyketide synthase; part of the gene cluster that mediates the biosynthesis of fusaric acid, a mycotoxin with low to moderate toxicity to animals and humans, but with high phytotoxic properties. L-aspartate is suggested as fusaric acid amino acid precursor that is activated and further processed to O-acetyl-L-homoserine by cluster enzymes aspartate kinase FUB3 and homoserine O-acetyltransferase FUB5, as well as enzymes of the primary metabolism. The polyketide synthase (PKS) FUB1 generates the triketide trans-2-hexenal which is presumptively released by the hydrolase FUB4 and linked to the NRPS-bound amino acid precursor by NAD(P)-dependent dehydrogenase FUB6. FUB1, FUB4, and the non-canonical NRPS Fub8 may form an enzyme complex. Further processing of the NRPS-bound intermediate might be carried out by FUB6 and the sulfhydrylase FUB7, enabling a spontaneous electrocyclization to close the carbon backbone of fusaric acid. Dihydrofusaric acid is likely to be released via reduction by the thioester reductase (TR) domain of FUB8 whereupon the final oxidation to fusaric acid may (also) be performed by the FMN-dependent dehydrogenase FUB9. The chain is Reducing polyketide synthase FUB1 from Gibberella fujikuroi (strain CBS 195.34 / IMI 58289 / NRRL A-6831) (Bakanae and foot rot disease fungus).